Reading from the N-terminus, the 329-residue chain is Probable CTD kinase subunit alpha homolog (329 aa).

The 276-residue stretch at 22 to 297 (YEKIRIIGEG…VEQVVGSKYF (276 aa)) folds into the Protein kinase domain. Residues 28-36 (IGEGTFGQV) and lysine 49 each bind ATP. Aspartate 139 (proton acceptor) is an active-site residue.

It belongs to the protein kinase superfamily. CMGC Ser/Thr protein kinase family. CDC2/CDKX subfamily. Component of the CTDK-I complex.

It localises to the nucleus. Its subcellular location is the nucleolus. It catalyses the reaction [DNA-directed RNA polymerase] + ATP = phospho-[DNA-directed RNA polymerase] + ADP + H(+). In terms of biological role, catalytic subunit of the CTDK-I complex, which hyperphosphorylates the C-terminal heptapeptide repeat domain (CTD) of the largest RNA polymerase II subunit. Involved in RNA polymerase II transcriptional elongation and pre-mRNA 3'-end processing. The chain is Probable CTD kinase subunit alpha homolog (CTK1) from Encephalitozoon cuniculi (strain GB-M1) (Microsporidian parasite).